Consider the following 156-residue polypeptide: Small ribosomal subunit protein uS7 (156 aa).

This sequence belongs to the universal ribosomal protein uS7 family. Part of the 30S ribosomal subunit. Contacts proteins S9 and S11.

One of the primary rRNA binding proteins, it binds directly to 16S rRNA where it nucleates assembly of the head domain of the 30S subunit. Is located at the subunit interface close to the decoding center, probably blocks exit of the E-site tRNA. The polypeptide is Small ribosomal subunit protein uS7 (Haemophilus influenzae (strain 86-028NP)).